A 124-amino-acid chain; its full sequence is Small ribosomal subunit protein uS12 (124 aa).

A 3-methylthioaspartic acid modification is found at D89.

The protein belongs to the universal ribosomal protein uS12 family. In terms of assembly, part of the 30S ribosomal subunit. Contacts proteins S8 and S17. May interact with IF1 in the 30S initiation complex.

Its function is as follows. With S4 and S5 plays an important role in translational accuracy. Functionally, interacts with and stabilizes bases of the 16S rRNA that are involved in tRNA selection in the A site and with the mRNA backbone. Located at the interface of the 30S and 50S subunits, it traverses the body of the 30S subunit contacting proteins on the other side and probably holding the rRNA structure together. The combined cluster of proteins S8, S12 and S17 appears to hold together the shoulder and platform of the 30S subunit. The protein is Small ribosomal subunit protein uS12 of Vibrio atlanticus (strain LGP32) (Vibrio splendidus (strain Mel32)).